The sequence spans 353 residues: MWLLEKAGYKVGAAEPAARWAPSGLFSKRRAPGPPTSACPNVLTPDRIPQFFIPPRLPDPGGAVPAARRHVAGRGLPATCSLPHLAGREGWAFLPESPHTRRRESLFHGPPPAPAGGLPAAQSRLHVSAPDLRLCRAPDSDTASSPDSSPFGSPRPGLGRRRVSRPHSLSPEKASSADTSPHSPRRAGPPTPPLFHLDFLCCQLRPTRESVLRLGPRGGQLRLSTEYQAGPGRLRLRLVSAEGLPRPRSRPGSGGGGCCVVLRLRPRVRPREQQSRVVKCSANPIFNEDFFFDGLGPPDLAARSLRAKVLDRGAGLRRDVLLGECETPLIALLPPLGGGLGPGSSLAPTHLSL.

The interval 135–191 (CRAPDSDTASSPDSSPFGSPRPGLGRRRVSRPHSLSPEKASSADTSPHSPRRAGPPT) is disordered. Over residues 140–150 (SDTASSPDSSP) the composition is skewed to low complexity. In terms of domain architecture, C2 spans 217 to 343 (RGGQLRLSTE…PPLGGGLGPG (127 aa)).

This chain is C2 calcium-dependent domain-containing protein 4D (C2CD4D), found in Homo sapiens (Human).